A 613-amino-acid chain; its full sequence is MATIPDWKLQLLARRRQEEASVRGREKAERERLSQMPAWKRGLLERRRAKLGLSPGEPSPVPGTAEAGPPDPDESSVLLEAIGPVHQNRFIRQERQQQQQQQQRSEELLAERKPVPLEARERRPSPGEMRDQSPKGRESREERLSPRETRERRLGIGGAQESSLRPLEARDWRQSPGEVGDRSSRLSEPWKWRLSPGETPERSLRLAESREQSPRRKEVESRLSPGESAYQKLGLTEAHKWRPDSRESQEQSLVQLEATEWRLRSGEERQGYSEKCGRKEEWPVPGVAPEETTELSETLTREAQGSSSTGMEAAEQRPVEDGERGMKPAEGWKWTLNSGKAREWTPRDIEAQTQKPEPSESAEKRLESPSVEAGEGEAEKEEAGAQGRPLRALQNCCSVPSPLPPEDAGTGGLRQQEEEAVELQPPPPAPLSPPPPAPTAPQPPGDPLMSRLFYGVKAGPGVGAPRRSGHTFTVNPRRSVPPTTPATPTSPATADAAVPGAGKKRYPTAEEILVLGGYLRLSRSCLAKGSPERHHKQLKISFSETALETTYQYPSESSVLEELGPEPEVPSAPNPPAAQPDDEEDEEELLLLQPELQGGLRTKALIVDESCRR.

Residues 15 to 33 show a composition bias toward basic and acidic residues; that stretch reads RRQEEASVRGREKAERERL. 2 disordered regions span residues 15–231 and 266–505; these read RRQE…SAYQ and GEER…GKKR. A phosphoserine mark is found at Ser54, Ser125, Ser133, Ser175, and Ser195. Composition is skewed to basic and acidic residues over residues 104-154 and 167-191; these read RSEE…ERRL and LEAR…EPWK. Phosphothreonine is present on Thr199. Basic and acidic residues predominate over residues 199–221; sequence TPERSLRLAESREQSPRRKEVES. Ser224 bears the Phosphoserine mark. The span at 266 to 282 shows a compositional bias: basic and acidic residues; that stretch reads GEERQGYSEKCGRKEEW. The segment covering 301–310 has biased composition (polar residues); that stretch reads REAQGSSSTG. Basic and acidic residues-rich tracts occupy residues 314–327, 340–350, and 357–367; these read AEQR…RGMK, KAREWTPRDIE, and EPSESAEKRLE. Phosphoserine is present on residues Ser368 and Ser432. The span at 424–446 shows a compositional bias: pro residues; sequence QPPPPAPLSPPPPAPTAPQPPGD. N6-acetyllysine is present on Lys457. Residues 476–499 show a composition bias toward low complexity; the sequence is PRRSVPPTTPATPTSPATADAAVP. Phosphoserine is present on residues Ser490 and Ser530. The interval 552-594 is disordered; that stretch reads QYPSESSVLEELGPEPEVPSAPNPPAAQPDDEEDEEELLLLQP. The span at 567–578 shows a compositional bias: pro residues; that stretch reads PEVPSAPNPPAA. Residues 580-589 show a composition bias toward acidic residues; sequence PDDEEDEEEL.

As to quaternary structure, interacts with Protein phosphatase 1 (PP1).

It localises to the cytoplasm. The protein localises to the cytoskeleton. Its function is as follows. May target protein phosphatase 1 to F-actin cytoskeleton. The protein is Phostensin (PPP1R18) of Macaca mulatta (Rhesus macaque).